The following is a 775-amino-acid chain: Semaphorin-3E (775 aa).

An N-terminal signal peptide occupies residues 1 to 25 (MASAGHIITLLLWGYLLELWTGGHT). Positions 32-516 (RLRLSHKELL…SASAVAQVRF (485 aa)) constitute a Sema domain. An N-linked (GlcNAc...) asparagine glycan is attached at N44. C105 and C115 are joined by a disulfide. N126 is a glycosylation site (N-linked (GlcNAc...) asparagine). 4 disulfide bridges follow: C133-C142, C270-C382, C294-C342, and C519-C537. N-linked (GlcNAc...) asparagine glycosylation occurs at N330. The Ig-like C2-type domain occupies 581–669 (ALDKTEEHLA…SFVHTVRKIT (89 aa)). N-linked (GlcNAc...) asparagine glycans are attached at residues N595 and N596. Residues C654 and C729 are joined by a disulfide bond. A disordered region spans residues 742–775 (LKMSPSKWKYANPQEKKLRSKPEHYRLPRHTLDS). The span at 755 to 775 (QEKKLRSKPEHYRLPRHTLDS) shows a compositional bias: basic and acidic residues.

It belongs to the semaphorin family. In terms of assembly, interacts with PLXND1.

It is found in the secreted. Functionally, plays an important role in signaling via the cell surface receptor PLXND1. Mediates reorganization of the actin cytoskeleton, leading to the retraction of cell projections. Promotes focal adhesion disassembly and inhibits adhesion of endothelial cells to the extracellular matrix. Regulates angiogenesis, both during embryogenesis and after birth. Can down-regulate sprouting angiogenesis. Required for normal vascular patterning during embryogenesis. Plays an important role in ensuring the specificity of synapse formation. The polypeptide is Semaphorin-3E (SEMA3E) (Homo sapiens (Human)).